Consider the following 283-residue polypeptide: Probable 3-deoxy-manno-octulosonic acid transferase (283 aa).

It localises to the cytoplasm. It carries out the reaction an alpha-Kdo-(2-&gt;4)-alpha-Kdo-(2-&gt;6)-lipid IVA + CMP-3-deoxy-beta-D-manno-octulosonate = an alpha-Kdo-(2-&gt;4)-alpha-Kdo-(2-&gt;4)-alpha-Kdo-(2-&gt;6)-lipid IVA + CMP + H(+). The enzyme catalyses alpha-Kdo-(2-&gt;4)-alpha-Kdo-(2-&gt;6)-lipid IVA (E. coli) + CMP-3-deoxy-beta-D-manno-octulosonate = alpha-Kdo-(2-&gt;4)-alpha-Kdo-(2-&gt;4)-alpha-Kdo-(2-&gt;6)-lipid IVA + CMP + H(+). It functions in the pathway bacterial outer membrane biogenesis; LPS core biosynthesis. It participates in bacterial outer membrane biogenesis; LOS core biosynthesis. Its function is as follows. Involved in the biosynthesis of the core oligosaccharide region of lipopolysaccharide (LPS). Required for the addition of 3-deoxy-D-manno-oct-2-ulosonic acid III (KdoIII) to the KdoII residue of the inner lipopolysaccharide core. May also play a role in a lipooligosaccharide (LOS) biosynthesis pathway. This chain is Probable 3-deoxy-manno-octulosonic acid transferase, found in Escherichia coli (strain K12).